The sequence spans 63 residues: MLNFEAIIETGDQVIQQISFDLQHISSVLNTELFDPFEVCCYRGGNYWELESAEEFSGDDESS.

The polypeptide is Non-structural protein 3b (Avian infectious bronchitis virus (strain UK/183/66) (IBV)).